The primary structure comprises 218 residues: Lipoprotein-releasing system ATP-binding protein LolD (218 aa).

The 217-residue stretch at 2-218 folds into the ABC transporter domain; the sequence is IKLEGITKSF…HMVDGTIKKD (217 aa). 34–41 lines the ATP pocket; sequence GPSGAGKT.

It belongs to the ABC transporter superfamily. Lipoprotein translocase (TC 3.A.1.125) family. In terms of assembly, the complex is composed of two ATP-binding proteins (LolD) and two transmembrane proteins (LolC and LolE).

It localises to the cell inner membrane. In terms of biological role, part of the ABC transporter complex LolCDE involved in the translocation of mature outer membrane-directed lipoproteins, from the inner membrane to the periplasmic chaperone, LolA. Responsible for the formation of the LolA-lipoprotein complex in an ATP-dependent manner. The chain is Lipoprotein-releasing system ATP-binding protein LolD from Bacteroides thetaiotaomicron (strain ATCC 29148 / DSM 2079 / JCM 5827 / CCUG 10774 / NCTC 10582 / VPI-5482 / E50).